A 359-amino-acid chain; its full sequence is (2E,6E)-farnesyl diphosphate synthase (359 aa).

Residues 1–21 form a disordered region; that stretch reads MRGTDEKYGLPPQPDSDRMTR. Isopentenyl diphosphate is bound by residues Lys73, Arg76, and His105. Mg(2+) contacts are provided by Asp112 and Asp116. A DDXXD motif motif is present at residues 112–116; it reads DDLMD. Arg121 contacts (2E)-geranyl diphosphate. Arg122 contacts isopentenyl diphosphate. Positions 201, 202, and 239 each coordinate (2E)-geranyl diphosphate. A DDXXD motif motif is present at residues 242-246; that stretch reads DDLLG. (2E)-geranyl diphosphate is bound by residues Lys256 and Lys266.

It belongs to the FPP/GGPP synthase family. It depends on Mg(2+) as a cofactor.

The protein localises to the cytoplasm. It catalyses the reaction isopentenyl diphosphate + (2E)-geranyl diphosphate = (2E,6E)-farnesyl diphosphate + diphosphate. The protein operates within isoprenoid biosynthesis; farnesyl diphosphate biosynthesis; farnesyl diphosphate from geranyl diphosphate and isopentenyl diphosphate. Its function is as follows. Catalyzes the condensation of isopentenyl pyrophosphate (IPP) with geranyl diphosphate (GPP) to yield (2E,6E)-farnesyl diphosphate (E,E-FPP). May be used for squalene and possibly sterol biosynthesis. The polypeptide is (2E,6E)-farnesyl diphosphate synthase (Mycobacterium bovis (strain ATCC BAA-935 / AF2122/97)).